The chain runs to 90 residues: Acylphosphatase (90 aa).

The Acylphosphatase-like domain occupies 3-90 (QYRIIVDGRV…DGFQKFNISY (88 aa)). Residues Arg18 and Asn36 contribute to the active site.

It belongs to the acylphosphatase family.

It catalyses the reaction an acyl phosphate + H2O = a carboxylate + phosphate + H(+). This Bacillus licheniformis (strain ATCC 14580 / DSM 13 / JCM 2505 / CCUG 7422 / NBRC 12200 / NCIMB 9375 / NCTC 10341 / NRRL NRS-1264 / Gibson 46) protein is Acylphosphatase (acyP).